We begin with the raw amino-acid sequence, 509 residues long: Zinc finger protein Aiolos (509 aa).

Residues 1 to 19 (MEDIQTNAELKSTQEQSVP) are compositionally biased toward polar residues. Residues 1–86 (MEDIQTNAEL…MGNAEEPEIP (86 aa)) are disordered. Residues serine 22 and serine 42 each carry the phosphoserine modification. The segment covering 56-72 (DSMKVKDEYSERDENVL) has biased composition (basic and acidic residues). Residues lysine 61, lysine 73, and lysine 100 each participate in a glycyl lysine isopeptide (Lys-Gly) (interchain with G-Cter in SUMO2) cross-link. 3 C2H2-type zinc fingers span residues 118-140 (MNCDVCGLSCISFNVLMVHKRSH), 146-168 (FQCNQCGASFTQKGNLLRHIKLH), and 174-196 (FKCHLCNYACQRRDALTGHLRTH). Residues 202–224 (YKCEFCGRSYKQRSSLEEHKERC) form a C2H2-type 4; atypical zinc finger. Residue lysine 245 forms a Glycyl lysine isopeptide (Lys-Gly) (interchain with G-Cter in SUMO2) linkage. Residue threonine 326 is modified to Phosphothreonine. Residues 364–394 (IHLPEKSVPSERGLSPNNSGHDSTDTDSNHE) are disordered. At serine 378 the chain carries Phosphoserine. Over residues 385–394 (DSTDTDSNHE) the composition is skewed to basic and acidic residues. The C2H2-type 5 zinc-finger motif lies at 452–474 (YRCDHCRVLFLDYVMFTIHMGCH). The interval 452–504 (YRCDHCRVLFLDYVMFTIHMGCHGFRDPFECNMCGYRSHDRYEFSSHIARGEH) is mediates homodimerization and heterodimerization. A C2H2-type 6; atypical zinc finger spans residues 480–504 (FECNMCGYRSHDRYEFSSHIARGEH).

Belongs to the Ikaros C2H2-type zinc-finger protein family. In terms of assembly, homodimer. Heterodimer with other IKAROS family members. Interacts with IKZF4 and IKZF5. Interacts with IKZF1. Interacts with HRAS. Interacts with FOXP3; this interaction may be required for silencing target genes and regulating the suppressive activity of FOXP3-positive regulatory T-cells (Treg). Interacts with BCL21L isoform Bcl-X(L); this interaction blocks the anti-apoptotic role of BCL21L. Associates with histone deacetylase complexes containing HDAC1, MTA2 and SIN3A. In terms of processing, phosphorylation on tyrosine residues induced by IL2 is required for dissociation from HRAS and nuclear translocation of IKZF3 in T-cells. Phosphorylation on tyrosine residues induced by IL4 is required for dissociation from Bcl-X(L) in T-cells. In terms of tissue distribution, expressed most strongly in peripheral blood leukocytes, the spleen, and the thymus.

It localises to the nucleus. Its subcellular location is the cytoplasm. In terms of biological role, transcription factor that plays an important role in the regulation of lymphocyte differentiation. Plays an essential role in regulation of B-cell differentiation, proliferation and maturation to an effector state. Involved in regulating BCL2 expression and controlling apoptosis in T-cells in an IL2-dependent manner. The polypeptide is Zinc finger protein Aiolos (IKZF3) (Homo sapiens (Human)).